Here is a 95-residue protein sequence, read N- to C-terminus: Co-chaperonin GroES (95 aa).

This sequence belongs to the GroES chaperonin family. As to quaternary structure, heptamer of 7 subunits arranged in a ring. Interacts with the chaperonin GroEL.

The protein localises to the cytoplasm. Together with the chaperonin GroEL, plays an essential role in assisting protein folding. The GroEL-GroES system forms a nano-cage that allows encapsulation of the non-native substrate proteins and provides a physical environment optimized to promote and accelerate protein folding. GroES binds to the apical surface of the GroEL ring, thereby capping the opening of the GroEL channel. The protein is Co-chaperonin GroES of Rickettsia prowazekii (strain Madrid E).